The chain runs to 1277 residues: Protein FAM83H (1277 aa).

A compositionally biased stretch (polar residues) spans 1-12; that stretch reads MARRSQSSSQGE. Disordered regions lie at residues 1-20, 67-98, 717-756, 772-805, 971-1018, 1070-1130, 1158-1225, and 1247-1266; these read MARR…PNYL, SLQR…SGTY, FGST…TNPL, SKLE…TGRT, EQTS…NSAF, KAEE…SRLS, QKNR…RDIL, and KKDE…AGKI. The span at 724–750 shows a compositional bias: basic and acidic residues; sequence SVEKAKENPPAEKEKEEGLLSRHDSFR. Polar residues-rich tracts occupy residues 777-805, 971-982, 993-1015, and 1112-1130; these read HTST…TGRT, EQTSSTIQTIGN, SGPT…TRPN, and KSLS…SRLS. Over residues 1204–1215 the composition is skewed to low complexity; that stretch reads SFLSRSRFSRPS. Over residues 1247–1263 the composition is skewed to basic and acidic residues; that stretch reads KKDEQPSHADDNDDKKA.

This sequence belongs to the FAM83 family.

It localises to the cytoplasm. It is found in the cytoskeleton. In terms of biological role, may play a role in keratin cytoskeleton disassembly. The polypeptide is Protein FAM83H (Xenopus tropicalis (Western clawed frog)).